The primary structure comprises 146 residues: Putative pre-16S rRNA nuclease (146 aa).

This sequence belongs to the YqgF nuclease family.

It is found in the cytoplasm. In terms of biological role, could be a nuclease involved in processing of the 5'-end of pre-16S rRNA. This is Putative pre-16S rRNA nuclease from Mycoplasmopsis pulmonis (strain UAB CTIP) (Mycoplasma pulmonis).